Consider the following 727-residue polypeptide: Telomere repeats-binding bouquet formation protein 1 (727 aa).

ARM repeat units lie at residues 101-144 (ELFE…RETG) and 339-382 (NGLP…GEYP). A coiled-coil region spans residues 398–446 (ENNLEEHWRKAKEILHRIEQLEREGNEEEIQRENYQDNISSMNISIQNT). Residues 457-468 (RGSKAEDEDKSH) are compositionally biased toward basic and acidic residues. The tract at residues 457-493 (RGSKAEDEDKSHSRQLQSYKSHGVMSKACTNDDQMKT) is disordered. The interval 523 to 662 (QNLHEETTFE…QRLSNESTTP (140 aa)) is interaction with TERF1. Thr-648 is modified (phosphothreonine). Residues 666–719 (KKRRIRKNFTEEEVNYLFNGVKKMGNHWNSILWSFPFQQGRKAVDLAHKYHKLT) form the Myb-like domain.

This sequence belongs to the TERB1 family. Component of the MAJIN-TERB1-TERB2 complex, composed of MAJIN, TERB1 and TERB2. Interacts with TERF1, STAG3 and SUN1. Interacts (via Myb-like domain) with the cohesin complex; probably mediated via interaction with STAG3. Phosphorylated by CDK. Phosphorylation by CDK takes place in late prophase when the cap exchange is prominent. is important for the stabilization of telomere attachment but dispenable for the cap exchange.

It localises to the chromosome. The protein localises to the telomere. It is found in the nucleus inner membrane. Functionally, meiosis-specific telomere-associated protein involved in meiotic telomere attachment to the nucleus inner membrane, a crucial step for homologous pairing and synapsis. Component of the MAJIN-TERB1-TERB2 complex, which promotes telomere cap exchange by mediating attachment of telomeric DNA to the inner nuclear membrane and replacement of the protective cap of telomeric chromosomes: in early meiosis, the MAJIN-TERB1-TERB2 complex associates with telomeric DNA and the shelterin/telosome complex. During prophase, the complex matures and promotes release of the shelterin/telosome complex from telomeric DNA. In the MAJIN-TERB1-TERB2 complex, TERB1 probably mediates association with the shelterin/telosome complex via interaction with TERF1, promoting priming telomeric DNA attachment'. Promotes telomere association with the nuclear envelope and deposition of the SUN-KASH/LINC complex. Also recruits cohesin to telomeres to develop structural rigidity. The protein is Telomere repeats-binding bouquet formation protein 1 of Homo sapiens (Human).